The following is a 619-amino-acid chain: Trihelix transcription factor GTL2 (619 aa).

Disordered stretches follow at residues 11–41 and 62–100; these read HRFI…VSFS and HHHH…HHHH. Residues 16 to 27 show a composition bias toward pro residues; sequence SPPPPPPLPPHQ. Positions 102–154 constitute a Myb-like 1 domain; the sequence is PWCSDEVLALLRFRSTVENWFPEFTWEHTSRKLAEVGFKRSPQECKEKFEEEE. Residues 307–361 adopt a coiled-coil conformation; the sequence is VRNMIAQQEEMHKKLLEDMVKKEEEKIAREEAWKKQEIERVNKEVEIRAQEQAMA. Disordered regions lie at residues 382–414 and 434–458; these read VVQN…SSLL and STKT…DLGK. Residues 384–396 are compositionally biased toward polar residues; sequence QNPTSPSQDSSSL. Positions 435 to 444 are enriched in low complexity; it reads TKTLKPKNQN. Residues 448 to 458 show a composition bias toward basic and acidic residues; it reads PKSDDKSDLGK. The Myb-like 2 domain occupies 459–526; it reads RWPKDEVLAL…RCKEKWENIN (68 aa). The short motif at 503 to 510 is the Nuclear localization signal element; the sequence is SKKMLEIG. The tract at residues 557 to 619 is disordered; that stretch reads SQPPTGTTAT…VQFSGFDLEF (63 aa). Low complexity predominate over residues 561 to 574; the sequence is TGTTATTATTATSA. Residues 575–585 show a composition bias toward basic and acidic residues; that stretch reads RDLDTRPEENR.

It is found in the nucleus. Functionally, probable transcription factor that binds specific DNA sequence. This chain is Trihelix transcription factor GTL2, found in Arabidopsis thaliana (Mouse-ear cress).